Reading from the N-terminus, the 566-residue chain is Sorting nexin lst-4 (566 aa).

The SH3 domain maps to 1–61 (MAQVKAEYDF…PESYVTPYQA (61 aa)). A disordered region spans residues 59-179 (YQASRPPPVL…DRGSNKVNKN (121 aa)). Residues 63–77 (RPPPVLPPPLPPTSS) show a composition bias toward pro residues. The span at 127–140 (DDFDDEWTDEDDEQ) shows a compositional bias: acidic residues. Over residues 143–154 (TRPNVQSSIGSN) the composition is skewed to polar residues. The span at 155-173 (SRRDLSRSHSEHGGPDRGS) shows a compositional bias: basic and acidic residues. The 113-residue stretch at 227–339 (YTCIVDKPKK…HFISCTDEKD (113 aa)) folds into the PX domain. The region spanning 362-566 (TVPHQPLDPN…KLTSLAARYD (205 aa)) is the BAR domain.

This sequence belongs to the sorting nexin family. Homodimer. Isoform d interacts (via SH3 domain) with dyn-1. Expressed in vulval precursor cells (VPCs) and apoptotic germ cells. Colocalizes with actin, dyn-1 and rab-5 in early phagosomes.

It is found in the cytoplasm. It localises to the cytoplasmic vesicle. Its subcellular location is the phagosome membrane. Involved in the signaling of vulval development by acting as a negative regulator of epidermal growth factor receptor (EGFR) signaling. Aids in phagosomal membrane tubule formation which is required for phagosomal fusion with endosomes and lysosomes. Also recruits rab-7 to phagosomes by an interaction with dyn-1. These are events leading to phagosome maturation which is a step in apoptotic cell corpse clearance. Binds phosphatidylinositol-3,4,5-trisphosphate. This Caenorhabditis elegans protein is Sorting nexin lst-4.